The sequence spans 187 residues: Elongation factor P (187 aa).

Belongs to the elongation factor P family.

It localises to the cytoplasm. It functions in the pathway protein biosynthesis; polypeptide chain elongation. Functionally, involved in peptide bond synthesis. Stimulates efficient translation and peptide-bond synthesis on native or reconstituted 70S ribosomes in vitro. Probably functions indirectly by altering the affinity of the ribosome for aminoacyl-tRNA, thus increasing their reactivity as acceptors for peptidyl transferase. The chain is Elongation factor P from Sphingopyxis alaskensis (strain DSM 13593 / LMG 18877 / RB2256) (Sphingomonas alaskensis).